The primary structure comprises 121 residues: Flagellar protein FliT (121 aa).

Residues M1–L50 form a required for homodimerization region. The interval M60–V98 is fliD binding.

The protein belongs to the FliT family. In terms of assembly, homodimer. Interacts with FliD and FlhC.

It is found in the cytoplasm. The protein localises to the cytosol. Dual-function protein that regulates the transcription of class 2 flagellar operons and that also acts as an export chaperone for the filament-capping protein FliD. As a transcriptional regulator, acts as an anti-FlhDC factor; it directly binds FlhC, thus inhibiting the binding of the FlhC/FlhD complex to class 2 promoters, resulting in decreased expression of class 2 flagellar operons. As a chaperone, effects FliD transition to the membrane by preventing its premature polymerization, and by directing it to the export apparatus. This Shigella flexneri serotype 5b (strain 8401) protein is Flagellar protein FliT.